Here is a 729-residue protein sequence, read N- to C-terminus: 1,4-alpha-glucan branching enzyme GlgB (729 aa).

D405 acts as the Nucleophile in catalysis. The active-site Proton donor is the E458.

Belongs to the glycosyl hydrolase 13 family. GlgB subfamily. Monomer.

The enzyme catalyses Transfers a segment of a (1-&gt;4)-alpha-D-glucan chain to a primary hydroxy group in a similar glucan chain.. The protein operates within glycan biosynthesis; glycogen biosynthesis. Catalyzes the formation of the alpha-1,6-glucosidic linkages in glycogen by scission of a 1,4-alpha-linked oligosaccharide from growing alpha-1,4-glucan chains and the subsequent attachment of the oligosaccharide to the alpha-1,6 position. This is 1,4-alpha-glucan branching enzyme GlgB from Mannheimia succiniciproducens (strain KCTC 0769BP / MBEL55E).